The sequence spans 410 residues: Putative ribonuclease E (410 aa).

An S1 motif domain is found at 39-119; the sequence is SNIYKGKIVR…GTKGALLTTF (81 aa). Mg(2+)-binding residues include Asp303 and Asp346.

Belongs to the RNase E/G family. RNase E subfamily. As to quaternary structure, component of the RNA degradosome, which is a multiprotein complex involved in RNA processing and mRNA degradation. Within the RNA degradosome, RNase E assembles into a homotetramer formed by a dimer of dimers. The cofactor is Mg(2+).

It localises to the cytoplasm. The protein localises to the cell inner membrane. The catalysed reaction is Endonucleolytic cleavage of single-stranded RNA in A- and U-rich regions.. Functionally, endoribonuclease that plays a central role in RNA processing and decay. Required for the maturation of 5S and 16S rRNAs and the majority of tRNAs. Also involved in the degradation of most mRNAs. In Buchnera aphidicola subsp. Baizongia pistaciae (strain Bp), this protein is Putative ribonuclease E (rne).